Reading from the N-terminus, the 369-residue chain is Protein phosphatase 1 regulatory inhibitor subunit PPP1R8 homolog (369 aa).

Residues 1-11 (MYGRSGLDRFK) show a composition bias toward basic and acidic residues. Residues 1–26 (MYGRSGLDRFKKSQTSEPFSVSANPP) form a disordered region. Over residues 13 to 23 (SQTSEPFSVSA) the composition is skewed to polar residues. The FHA domain maps to 87 to 138 (HIFGRQHQTCDFVLDHQSVSRQHAAVVPHKNGSIFVIDLGSAHGTFVANERL). The interval 345 to 369 (VSQPAAETECGGVGEEDDNDDLFGD) is disordered. Residues 358–369 (GEEDDNDDLFGD) are compositionally biased toward acidic residues.

In terms of assembly, interacts with human protein phosphatase PPP1C.

Its function is as follows. Inhibitor of protein-phosphatase 1 (PP1). Binds to and inhibits PP1 activity. This Arabidopsis thaliana (Mouse-ear cress) protein is Protein phosphatase 1 regulatory inhibitor subunit PPP1R8 homolog.